Consider the following 635-residue polypeptide: Sulfite reductase [ferredoxin], chloroplastic (635 aa).

Residues 1 to 50 (MSGAIGGAEVHGFRGAAAQLPRSRVLGRPIRVAPPAAARPGGASAGSIRA) constitute a chloroplast transit peptide. Disordered stretches follow at residues 31-50 (RVAP…SIRA) and 245-267 (PEVT…PEPI). The segment covering 245–254 (PEVTKARNDN) has biased composition (basic and acidic residues). Positions 494, 500, 540, and 544 each coordinate [4Fe-4S] cluster. Position 544 (Cys544) interacts with siroheme.

This sequence belongs to the nitrite and sulfite reductase 4Fe-4S domain family. As to quaternary structure, monomer. Interacts with ferredoxin. The cofactor is siroheme. It depends on [4Fe-4S] cluster as a cofactor. In terms of processing, phosphorylated; this phosphorylation reduces DNA-binding. Present in roots and leaves (at protein level). In leaves, sulfite reductase activity is detected in both bundle sheath and mesophyll cell types.

The protein localises to the plastid. It is found in the chloroplast stroma. The protein resides in the chloroplast nucleoid. Its subcellular location is the plastid stroma. The catalysed reaction is hydrogen sulfide + 6 oxidized [2Fe-2S]-[ferredoxin] + 3 H2O = sulfite + 6 reduced [2Fe-2S]-[ferredoxin] + 7 H(+). Inhibited by the tryptophan-modifying reagent, N-bromosuccinimide (NBS), by the lysine-modifying reagent, N-acetylsuccinimide and by the arginine-modifying reagent, phenylglyoxal. Complex formation with ferredoxin prevents these inhibitions. Functionally, essential protein with sulfite reductase activity required in assimilatory sulfate reduction pathway during both primary and secondary metabolism and thus involved in development and growth. DNA-binding protein that binds to both double-stranded and single-stranded DNA without significant sequence specificity to reversibly repress the transcriptional activity of chloroplast nucleoids by promoting DNA compaction and possibly regulate DNA replication. The protein is Sulfite reductase [ferredoxin], chloroplastic (SIR) of Zea mays (Maize).